A 77-amino-acid chain; its full sequence is Acyl carrier protein (77 aa).

In terms of domain architecture, Carrier spans 2–77 (SDVADRVKKI…DAVKFISEAS (76 aa)). Position 37 is an O-(pantetheine 4'-phosphoryl)serine (Ser-37).

Belongs to the acyl carrier protein (ACP) family. 4'-phosphopantetheine is transferred from CoA to a specific serine of apo-ACP by AcpS. This modification is essential for activity because fatty acids are bound in thioester linkage to the sulfhydryl of the prosthetic group.

It is found in the cytoplasm. Its pathway is lipid metabolism; fatty acid biosynthesis. Its function is as follows. Carrier of the growing fatty acid chain in fatty acid biosynthesis. The sequence is that of Acyl carrier protein from Ruegeria pomeroyi (strain ATCC 700808 / DSM 15171 / DSS-3) (Silicibacter pomeroyi).